Here is a 618-residue protein sequence, read N- to C-terminus: Putative ATP-dependent DNA helicase Q1 (618 aa).

The Helicase ATP-binding domain occupies 95–270 (INAVMSKEDA…KKMLGIPVAI (176 aa)). 108-115 (LSTGGGKS) is an ATP binding site. The short motif at 214–217 (DEVH) is the DEVH box element. The Helicase C-terminal domain maps to 295–443 (CVEKIVRTIK…NLYNMVRYAS (149 aa)). Residues Cys-448, Cys-466, Cys-470, and Cys-473 each contribute to the Zn(2+) site. The disordered stretch occupies residues 586–618 (KGRAEENNRKRKAAVTSSDEEVDVGDDDDVITL). A compositionally biased stretch (acidic residues) spans 603–618 (SDEEVDVGDDDDVITL).

It belongs to the helicase family. RecQ subfamily. Zn(2+) serves as cofactor.

The protein localises to the nucleus. It catalyses the reaction Couples ATP hydrolysis with the unwinding of duplex DNA by translocating in the 3'-5' direction.. It carries out the reaction ATP + H2O = ADP + phosphate + H(+). Its function is as follows. DNA helicase that may play a role in the repair of DNA that is damaged by ultraviolet light or other mutagens. Exhibits a magnesium-dependent ATP-dependent DNA-helicase activity that unwinds single- and double-stranded DNA in a 3'-5' direction. This chain is Putative ATP-dependent DNA helicase Q1, found in Caenorhabditis briggsae.